The sequence spans 186 residues: Peptidyl-tRNA hydrolase (186 aa).

Residue Tyr-14 participates in tRNA binding. His-19 functions as the Proton acceptor in the catalytic mechanism. TRNA is bound by residues Phe-64, Asn-66, and Asn-112.

The protein belongs to the PTH family. As to quaternary structure, monomer.

It is found in the cytoplasm. The catalysed reaction is an N-acyl-L-alpha-aminoacyl-tRNA + H2O = an N-acyl-L-amino acid + a tRNA + H(+). Functionally, hydrolyzes ribosome-free peptidyl-tRNAs (with 1 or more amino acids incorporated), which drop off the ribosome during protein synthesis, or as a result of ribosome stalling. In terms of biological role, catalyzes the release of premature peptidyl moieties from peptidyl-tRNA molecules trapped in stalled 50S ribosomal subunits, and thus maintains levels of free tRNAs and 50S ribosomes. This chain is Peptidyl-tRNA hydrolase, found in Listeria monocytogenes serotype 4a (strain HCC23).